A 481-amino-acid chain; its full sequence is Trigger factor (481 aa).

The region spanning 161 to 298 (GDQLTATVQT…VSEIQNRQLP (138 aa)) is the PPIase FKBP-type domain. The interval 173 to 245 (DGVPLHKLDE…PTTLIMEERR (73 aa)) is disordered. Residues 182-235 (EEDDDDDDDDDDDDDDDDDDDDDDDDDDDDDDDDDDDDDDDDDDDDDDDDDEGE) show a composition bias toward acidic residues.

Belongs to the FKBP-type PPIase family. Tig subfamily.

The protein resides in the cytoplasm. The enzyme catalyses [protein]-peptidylproline (omega=180) = [protein]-peptidylproline (omega=0). In terms of biological role, involved in protein export. Acts as a chaperone by maintaining the newly synthesized protein in an open conformation. Functions as a peptidyl-prolyl cis-trans isomerase. This Herpetosiphon aurantiacus (strain ATCC 23779 / DSM 785 / 114-95) protein is Trigger factor.